The sequence spans 248 residues: 3-deoxy-manno-octulosonate cytidylyltransferase (248 aa).

It belongs to the KdsB family. It depends on Mg(2+) as a cofactor.

It is found in the cytoplasm. It catalyses the reaction 3-deoxy-alpha-D-manno-oct-2-ulosonate + CTP = CMP-3-deoxy-beta-D-manno-octulosonate + diphosphate. It participates in nucleotide-sugar biosynthesis; CMP-3-deoxy-D-manno-octulosonate biosynthesis; CMP-3-deoxy-D-manno-octulosonate from 3-deoxy-D-manno-octulosonate and CTP: step 1/1. Its pathway is bacterial outer membrane biogenesis; lipopolysaccharide biosynthesis. Its function is as follows. Activates KDO (a required 8-carbon sugar) for incorporation into bacterial lipopolysaccharide in Gram-negative bacteria. This Escherichia coli O157:H7 protein is 3-deoxy-manno-octulosonate cytidylyltransferase.